We begin with the raw amino-acid sequence, 474 residues long: Cell division protein FtsP (474 aa).

The tat-type signal signal peptide spans 1-27; it reads MSLSRRQFIQAAGLALGAGSLPLRAQA. The 60-residue stretch at 229–288 folds into the Plastocyanin-like domain; it reads WVRLRLLNASNARRYTLQLSDGRPLYVVASDQGFLPAPVAVQQLSLAPGERREVVIDMSQ.

This sequence belongs to the FtsP family. Post-translationally, predicted to be exported by the Tat system. The position of the signal peptide cleavage has not been experimentally proven.

The protein localises to the periplasm. Its function is as follows. Cell division protein that is required for growth during stress conditions. May be involved in protecting or stabilizing the divisomal assembly under conditions of stress. In Yersinia pestis, this protein is Cell division protein FtsP.